A 190-amino-acid chain; its full sequence is Glycerol-3-phosphate acyltransferase 2 (190 aa).

The next 5 helical transmembrane spans lie at 1-21 (MNILTLILSYLIGSISFALIV), 53-73 (VIVAIADILKGTFACLLPLIL), 76-96 (TINPIVCGLLAILGHIFSVFA), 110-130 (VFLFLSPLGVLVGFVVFVLTL), and 152-172 (LIFEDKVIIALSLLIIVSIII).

Belongs to the PlsY family. Probably interacts with PlsX.

Its subcellular location is the cell membrane. The enzyme catalyses an acyl phosphate + sn-glycerol 3-phosphate = a 1-acyl-sn-glycero-3-phosphate + phosphate. Its pathway is lipid metabolism; phospholipid metabolism. Catalyzes the transfer of an acyl group from acyl-phosphate (acyl-PO(4)) to glycerol-3-phosphate (G3P) to form lysophosphatidic acid (LPA). This enzyme utilizes acyl-phosphate as fatty acyl donor, but not acyl-CoA or acyl-ACP. The sequence is that of Glycerol-3-phosphate acyltransferase 2 from Bacillus anthracis.